Here is a 455-residue protein sequence, read N- to C-terminus: Tubulin delta chain (455 aa).

143 to 149 (AGGTGSG) serves as a coordination point for GTP.

Belongs to the tubulin family. In terms of assembly, found in a complex with TEDC1, TEDC2, TUBE1 and TUBD1. Highly expressed in testis.

The protein resides in the cell projection. Its subcellular location is the cilium. It localises to the cytoplasm. The protein localises to the cytoskeleton. It is found in the microtubule organizing center. The protein resides in the centrosome. Its subcellular location is the centriole. It localises to the nucleus. Functionally, acts as a positive regulator of hedgehog signaling and regulates ciliary function. The chain is Tubulin delta chain (Tubd1) from Mus musculus (Mouse).